We begin with the raw amino-acid sequence, 156 residues long: Transcription elongation factor GreA (156 aa).

The stretch at 45-66 (NAEYHSAKEKQSFIEGRIKELE) forms a coiled coil.

It belongs to the GreA/GreB family.

In terms of biological role, necessary for efficient RNA polymerase transcription elongation past template-encoded arresting sites. The arresting sites in DNA have the property of trapping a certain fraction of elongating RNA polymerases that pass through, resulting in locked ternary complexes. Cleavage of the nascent transcript by cleavage factors such as GreA or GreB allows the resumption of elongation from the new 3'terminus. GreA releases sequences of 2 to 3 nucleotides. The protein is Transcription elongation factor GreA of Jannaschia sp. (strain CCS1).